Consider the following 259-residue polypeptide: Large ribosomal subunit protein uL3c (259 aa).

The transit peptide at 1–37 directs the protein to the chloroplast; it reads LKTTPLTLRSPFLHRLPLRALKTHKPTSLHISKSSIS. The disordered stretch occupies residues 176-211; it reads MTHGSKSHRQLGSIGAGTTPGRVYKGKKMPGRMGGT. A compositionally biased stretch (basic residues) spans 199 to 211; sequence YKGKKMPGRMGGT.

Belongs to the universal ribosomal protein uL3 family. In terms of assembly, part of the 50S ribosomal subunit.

It is found in the plastid. It localises to the chloroplast. In terms of biological role, one of the primary rRNA binding proteins, it binds directly near the 3'-end of the 23S rRNA, where it nucleates assembly of the 50S subunit. This Nicotiana tabacum (Common tobacco) protein is Large ribosomal subunit protein uL3c (RPL3).